We begin with the raw amino-acid sequence, 264 residues long: Small ribosomal subunit protein eS1 (264 aa).

Residues 236–255 (GEGGSGKRGEAGDKSERPEG) are compositionally biased toward basic and acidic residues. The segment at 236–264 (GEGGSGKRGEAGDKSERPEGYEPPVQESV) is disordered.

The protein belongs to the eukaryotic ribosomal protein eS1 family. In terms of assembly, component of the small ribosomal subunit. Mature ribosomes consist of a small (40S) and a large (60S) subunit. The 40S subunit contains about 33 different proteins and 1 molecule of RNA (18S). The 60S subunit contains about 49 different proteins and 3 molecules of RNA (28S, 5.8S and 5S).

The protein localises to the cytoplasm. The polypeptide is Small ribosomal subunit protein eS1 (Spodoptera frugiperda (Fall armyworm)).